Reading from the N-terminus, the 212-residue chain is Translation initiation factor IF-3 (212 aa).

It belongs to the IF-3 family. Monomer.

Its subcellular location is the cytoplasm. IF-3 binds to the 30S ribosomal subunit and shifts the equilibrium between 70S ribosomes and their 50S and 30S subunits in favor of the free subunits, thus enhancing the availability of 30S subunits on which protein synthesis initiation begins. The chain is Translation initiation factor IF-3 from Synechococcus sp. (strain CC9311).